A 229-amino-acid chain; its full sequence is Cytidylate kinase (229 aa).

15-23 provides a ligand contact to ATP; it reads GPAASGKST.

It belongs to the cytidylate kinase family. Type 1 subfamily.

The protein resides in the cytoplasm. It carries out the reaction CMP + ATP = CDP + ADP. The enzyme catalyses dCMP + ATP = dCDP + ADP. The chain is Cytidylate kinase from Herpetosiphon aurantiacus (strain ATCC 23779 / DSM 785 / 114-95).